Here is an 87-residue protein sequence, read N- to C-terminus: Small ribosomal subunit protein bS20 (87 aa).

Belongs to the bacterial ribosomal protein bS20 family.

Functionally, binds directly to 16S ribosomal RNA. This Parvibaculum lavamentivorans (strain DS-1 / DSM 13023 / NCIMB 13966) protein is Small ribosomal subunit protein bS20.